We begin with the raw amino-acid sequence, 180 residues long: Inner membrane-spanning protein YciB (180 aa).

The next 5 membrane-spanning stretches (helical) occupy residues 25 to 45 (QNAT…CYII), 49 to 69 (VSKL…ITLI), 76 to 96 (IKIK…MSGI), 118 to 138 (IILS…NEVV), and 150 to 170 (FKVF…LPLL).

Belongs to the YciB family.

The protein localises to the cell inner membrane. Plays a role in cell envelope biogenesis, maintenance of cell envelope integrity and membrane homeostasis. This chain is Inner membrane-spanning protein YciB, found in Rickettsia prowazekii (strain Madrid E).